The primary structure comprises 138 residues: Superoxide dismutase [Mn] (138 aa).

Residues His-1, His-49, Asp-133, and His-137 each coordinate Mn(2+).

It belongs to the iron/manganese superoxide dismutase family. Requires Mn(2+) as cofactor.

It catalyses the reaction 2 superoxide + 2 H(+) = H2O2 + O2. In terms of biological role, destroys superoxide anion radicals which are normally produced within the cells and which are toxic to biological systems. The sequence is that of Superoxide dismutase [Mn] (sodA) from Mycobacterium malmoense.